Consider the following 212-residue polypeptide: ER lumen protein-retaining receptor 2 (212 aa).

Residues 1 to 4 (MNVF) lie on the Lumenal side of the membrane. The chain crosses the membrane as a helical span at residues 5–24 (RLSGDLCHLAAIIILLLKIW). Residues 25-32 (NSRSCAGI) lie on the Cytoplasmic side of the membrane. The helical transmembrane segment at 33–52 (SGKSQLLFAMVFTTRYLDLF) threads the bilayer. Residues 47 to 48 (RY) are interaction with the K-D-E-L motif on target proteins. The Lumenal portion of the chain corresponds to 53–58 (TSFISL). The helical transmembrane segment at 59 to 79 (YNTSMKVIYMGCAYATVYLIY) threads the bilayer. The Cytoplasmic portion of the chain corresponds to 80–92 (MKFKATYDGNHDT). Residues 93–110 (FRVEFLVVPVGGLSVLVN) form a helical membrane-spanning segment. At 111–116 (HDFSPL) the chain is on the lumenal side. The helical transmembrane segment at 117–135 (EILWTFSIYLESVAILPQL) threads the bilayer. The Cytoplasmic segment spans residues 136-149 (FMISKTGEAETITT). A helical transmembrane segment spans residues 150-168 (HYLFFLGLYRALYLFNWIW). Positions 159–169 (RALYLFNWIWR) are interaction with the K-D-E-L motif on target proteins. At 169 to 178 (RFSFEGFFDL) the chain is on the lumenal side. A helical membrane pass occupies residues 179–199 (IAIVAGVVQTILYCDFFYLYV). The Cytoplasmic segment spans residues 200–212 (TKVLKGKKLSLPA). Positions 204-207 (KGKK) are important for recycling of cargo proteins with the sequence motif K-D-E-L from the Golgi to the endoplasmic reticulum.

The protein belongs to the ERD2 family.

It localises to the endoplasmic reticulum membrane. The protein localises to the golgi apparatus membrane. It is found in the cytoplasmic vesicle. Its subcellular location is the COPI-coated vesicle membrane. Receptor for the C-terminal sequence motif K-D-E-L that is present on endoplasmic reticulum resident proteins and that mediates their recycling from the Golgi back to the endoplasmic reticulum. Binding is pH dependent, and is optimal at pH 5-5.4. This is ER lumen protein-retaining receptor 2 (kdelr2) from Xenopus laevis (African clawed frog).